Reading from the N-terminus, the 238-residue chain is IkB-like protein (238 aa).

4 ANK repeats span residues 47 to 76, 86 to 119, 123 to 152, and 157 to 186; these read NGSSVFMWICIYGRIDFLKFLFKQESYPGE, DGNSALHYLAEKKNHLILEEVLGYFGKNGTRICL, NGITPVMKAAMRGRSLNMLSLIKFGADPTQ, and RGFTAWDWAVFTGNMELVKSLNHDYQKPLY. The Nuclear localization signal signature appears at 80–86; the sequence is PHRRDKD. The short motif at 202 to 213 is the Nuclear localization signal element; sequence KKKPKIIITGCK. The PxIxITxC motif; Interaction with host PPP3CA motif lies at 205–212; sequence PKIIITGC. The FLCV motif signature appears at 227–230; that stretch reads FLCV.

The protein belongs to the asfivirus A238L family. Interacts with host PPIA. Interacts with host PPP3CA/Calcineurin. Interacts with host RELA/p65; interaction of the 32 kDa form with host RELA results in the formation of a stable complex with NF-kappa-B. Interacts with host PPP3R1. Interacts with host EP300; this interaction inhibits the association of host EP300 with host RELA, JUN and NFATC2. In terms of processing, the protein exists in a 28 kDa and a 32 kDa form, probably due to post-translational modifications which are neither phosphorylation, nor sumoylation.

Its subcellular location is the host nucleus. It localises to the host cytoplasm. Functionally, ikB-like protein that inhibits the binding of NF-kappa-B to DNA, thereby downregulating pro-inflammatory cytokine production. Forms a heterodimer with the NF-kappa-B subunit RELA/p65 and prevents the activation of the NF-kappa-B transcription factor. Inhibits calcineurin function, which is required for the induction of nuclear factor of activated T cells (NFAT)-dependent immune response genes. Prevents the binding of substrates to calcineurin without affecting the phosphatase activity. Does not contain the serine residues that are phosphorylated by host IkB kinase and thus is not degraded following stimulation of the NFkB pathway. The sequence is that of IkB-like protein (A238L) from African swine fever virus (isolate Warthog/Namibia/Wart80/1980) (ASFV).